Consider the following 692-residue polypeptide: MPREYPLERTRNIGIMAHIDAGKTTTTERILFYTGKVHKMGEVHDGAATMDWMVQEQERGITITSAATTCFWKNHRINIIDTPGHVDFTVEVERSLRVLDGAVAIFCAVGGVEPQSETVWRQADKYGVPRIAYVNKMDRMGANFFEVVRQIKERLGANPVPIQLPIGNEDTFQGVIDLIENKAIIYTDDLGTQLAEAEIPAEMLDLVAEYREKVMEAAAEADEELMLKYLDGEELTPEEIRAGLRKATIAVKVVPVLCGSSFKNKGVQPLLDAIVYYLPSPVDIPAVRGINPETGDEDFRKASDSEPFAALAFKIMADPYVGKLTFFRVYSGVLKAGSYVLNSTKGKKERIGRLLRMHANHREEIDEVCSGDIAAAVGLKDTHTGDTICDEKHPIVLESMEFPEPVINVAIEPKTKQDQEKMSIALQRLAEEDPTFKMWTDQETGQTIIAGMGELHLEIIVDRLMREFKVEANVGKPQVAYKETVRGTAKAEGKYIRQTGGRGQYGHVWIEIEPLEPGKGYEFVNKIVGGVIPKEYIPAVDAGVREALESGVLAGYPVIDVRVTLFDGSFHEVDSSEMAFKIAGSMAAKQAVLKANPVLLEPIMKVEVVVPEEYMGEVIGDLNSRRGRIEGMEARNNMQVVRGYVPLAEMFGYATDLRSKTQGRGTYTMHFSHYEEVPKNLADQIIQKRQGK.

One can recognise a tr-type G domain in the interval 8–282; the sequence is ERTRNIGIMA…AIVYYLPSPV (275 aa). Residues 17–24, 81–85, and 135–138 contribute to the GTP site; these read AHIDAGKT, DTPGH, and NKMD.

It belongs to the TRAFAC class translation factor GTPase superfamily. Classic translation factor GTPase family. EF-G/EF-2 subfamily.

It is found in the cytoplasm. Catalyzes the GTP-dependent ribosomal translocation step during translation elongation. During this step, the ribosome changes from the pre-translocational (PRE) to the post-translocational (POST) state as the newly formed A-site-bound peptidyl-tRNA and P-site-bound deacylated tRNA move to the P and E sites, respectively. Catalyzes the coordinated movement of the two tRNA molecules, the mRNA and conformational changes in the ribosome. The protein is Elongation factor G of Carboxydothermus hydrogenoformans (strain ATCC BAA-161 / DSM 6008 / Z-2901).